We begin with the raw amino-acid sequence, 117 residues long: DNA-binding protein RdgB (117 aa).

The segment at residues 82-102 (NHSALAKKYNVSLQWIYKIVR) is a DNA-binding region (H-T-H motif).

Belongs to the c/mor transcriptional regulatory family.

Regulates pectin lyase production in response to DNA damage. This is DNA-binding protein RdgB (rdgB) from Pectobacterium carotovorum subsp. carotovorum (Erwinia carotovora subsp. carotovora).